The chain runs to 260 residues: Snake venom serine protease pallabin-2 (260 aa).

A signal peptide spans 1–18 (MVLIKVLANLLILQLSYA). The propeptide occupies 19 to 24 (QKSSEL). The region spanning 25 to 251 (IIGGDECNIN…HLDWIENIIA (227 aa)) is the Peptidase S1 domain. Intrachain disulfides connect Cys-31–Cys-163, Cys-50–Cys-66, Cys-98–Cys-258, Cys-142–Cys-212, Cys-174–Cys-191, and Cys-202–Cys-227. The active-site Charge relay system is the His-65. Asn-103 is a glycosylation site (N-linked (GlcNAc...) asparagine). Catalysis depends on Asp-110, which acts as the Charge relay system. Catalysis depends on Ser-206, which acts as the Charge relay system.

Belongs to the peptidase S1 family. Snake venom subfamily. In terms of assembly, monomer. Expressed by the venom gland.

The protein localises to the secreted. In terms of biological role, snake venom serine protease that may act in the hemostasis system of the prey. This Gloydius halys (Chinese water mocassin) protein is Snake venom serine protease pallabin-2 (JZTHR7).